The following is a 911-amino-acid chain: Protein translocase subunit SecA (911 aa).

Residues Q87, 105 to 109, and D512 contribute to the ATP site; that span reads GEGKT. Residues 861 to 893 form a disordered region; that stretch reads APGLESEQLSEEGAEVAVASAPVRNDQKLGRNE. Zn(2+) is bound by residues C895, C897, C906, and H907.

Belongs to the SecA family. Monomer and homodimer. Part of the essential Sec protein translocation apparatus which comprises SecA, SecYEG and auxiliary proteins SecDF-YajC and YidC. Zn(2+) serves as cofactor.

It is found in the cell inner membrane. The protein resides in the cytoplasm. The enzyme catalyses ATP + H2O + cellular proteinSide 1 = ADP + phosphate + cellular proteinSide 2.. In terms of biological role, part of the Sec protein translocase complex. Interacts with the SecYEG preprotein conducting channel. Has a central role in coupling the hydrolysis of ATP to the transfer of proteins into and across the cell membrane, serving both as a receptor for the preprotein-SecB complex and as an ATP-driven molecular motor driving the stepwise translocation of polypeptide chains across the membrane. This is Protein translocase subunit SecA from Pseudomonas putida (strain ATCC 700007 / DSM 6899 / JCM 31910 / BCRC 17059 / LMG 24140 / F1).